The following is an 834-amino-acid chain: Protein EFR3 homolog cmp44E (834 aa).

The HEAT repeat unit spans residues 120-156; the sequence is NLFVESFLRMVQKLLEDSNPNLKIMATNSFVKFANIN. A helical transmembrane segment spans residues 595–612; that stretch reads LHAISIGLLVLISRVSGI.

It belongs to the EFR3 family. As to expression, expression during embryogenesis is ubiquitous with notably higher levels in the CNS and brain.

The protein resides in the membrane. An essential gene required for embryogenesis; required for cell viability. This Drosophila melanogaster (Fruit fly) protein is Protein EFR3 homolog cmp44E (stmA).